Reading from the N-terminus, the 78-residue chain is Small ribosomal subunit protein bS16c (78 aa).

The protein belongs to the bacterial ribosomal protein bS16 family.

Its subcellular location is the plastid. The protein resides in the chloroplast. The polypeptide is Small ribosomal subunit protein bS16c (Adiantum capillus-veneris (Maidenhair fern)).